A 316-amino-acid polypeptide reads, in one-letter code: Thymidylate synthase (316 aa).

Residues R23 and 178–179 (RR) contribute to the dUMP site. C198 functions as the Nucleophile in the catalytic mechanism. DUMP-binding positions include 218-221 (RSGD), N229, and 259-261 (HIY). D221 serves as a coordination point for (6R)-5,10-methylene-5,6,7,8-tetrahydrofolate. A315 is a binding site for (6R)-5,10-methylene-5,6,7,8-tetrahydrofolate.

This sequence belongs to the thymidylate synthase family. Bacterial-type ThyA subfamily. As to quaternary structure, homodimer.

The protein resides in the cytoplasm. It catalyses the reaction dUMP + (6R)-5,10-methylene-5,6,7,8-tetrahydrofolate = 7,8-dihydrofolate + dTMP. It participates in pyrimidine metabolism; dTTP biosynthesis. Catalyzes the reductive methylation of 2'-deoxyuridine-5'-monophosphate (dUMP) to 2'-deoxythymidine-5'-monophosphate (dTMP) while utilizing 5,10-methylenetetrahydrofolate (mTHF) as the methyl donor and reductant in the reaction, yielding dihydrofolate (DHF) as a by-product. This enzymatic reaction provides an intracellular de novo source of dTMP, an essential precursor for DNA biosynthesis. This Pediococcus pentosaceus (strain ATCC 25745 / CCUG 21536 / LMG 10740 / 183-1w) protein is Thymidylate synthase.